The chain runs to 177 residues: FANCD2 opposite strand protein (177 aa).

The chain is FANCD2 opposite strand protein (FANCD2OS) from Homo sapiens (Human).